Here is a 65-residue protein sequence, read N- to C-terminus: Carboxypeptidase A inhibitor (65 aa).

This sequence belongs to the protease inhibitor I44 family.

It localises to the secreted. In terms of biological role, inhibits carboxypeptidase A. The chain is Carboxypeptidase A inhibitor from Ascaris suum (Pig roundworm).